Here is a 349-residue protein sequence, read N- to C-terminus: Phosphate acyltransferase (349 aa).

This sequence belongs to the PlsX family. In terms of assembly, homodimer. Probably interacts with PlsY.

The protein localises to the cytoplasm. It catalyses the reaction a fatty acyl-[ACP] + phosphate = an acyl phosphate + holo-[ACP]. It functions in the pathway lipid metabolism; phospholipid metabolism. In terms of biological role, catalyzes the reversible formation of acyl-phosphate (acyl-PO(4)) from acyl-[acyl-carrier-protein] (acyl-ACP). This enzyme utilizes acyl-ACP as fatty acyl donor, but not acyl-CoA. This chain is Phosphate acyltransferase, found in Rhodospirillum rubrum (strain ATCC 11170 / ATH 1.1.1 / DSM 467 / LMG 4362 / NCIMB 8255 / S1).